Reading from the N-terminus, the 141-residue chain is Large ribosomal subunit protein uL16 (141 aa).

Residues 1–23 (MLMPKRTKWRKQQKGRNRGKSFR) are disordered.

The protein belongs to the universal ribosomal protein uL16 family. As to quaternary structure, part of the 50S ribosomal subunit.

Its function is as follows. Binds 23S rRNA and is also seen to make contacts with the A and possibly P site tRNAs. The protein is Large ribosomal subunit protein uL16 of Sulfurovum sp. (strain NBC37-1).